The chain runs to 461 residues: MSILEWFWNILCGMAQYLTFSKNLTNDNLVNIYVKSNVGGTISVNLDPKSDIKNVKELVAPKLGLEPDDVKIIFAGKELLDSTVIEVLDFFSDILHAVKVNKKIKNVIPDKPLCETLEELHQLNDQKNVESIEESNLKNEGKNKAHFFIYCANPCKKINTGKLRVCCSECKHGAFTVDTDPQSWADVLDKNKITGVCNNVGCEGLYAKFYFKCASHPSQGENDTAVPLNLIKRNHKKIPCLACTDICDPVLVFSCDNRHVTCLECFKNYCGSRLKDRQFLSHPDFGYTLPCPAGCSNSFIEEVHHFRLLTDAQYEQYHRFATEEFILQAGGVLCPQPGCGQGILIDQNCNRVQCSCGYVFCGKCLEGFHLGECLNPTDVPFLSQNCDYPLDPEKLEKARWDEASSTVIKVLTKPCPKCRTSTERAGGCMHMICTRANCGFHWCWVCQGPWERDCMASHWFG.

The region spanning Val-30–Phe-90 is the Ubiquitin-like domain. A Phosphoserine modification is found at Ser-92. An RING-type 0; atypical zinc finger spans residues Ala-145–Pro-227. 4 residues coordinate Zn(2+): Cys-151, Cys-155, Cys-167, and Cys-170. A Phosphothreonine modification is found at Thr-176. Residues Cys-197, Cys-202, Cys-213, His-216, Cys-240, Cys-243, Cys-255, His-259, Cys-262, Cys-265, Cys-291, Cys-295, Cys-334, Cys-339, Cys-354, Cys-356, Cys-361, Cys-364, His-369, Cys-373, Cys-415, and Cys-418 each coordinate Zn(2+). The tract at residues Lys-236 to Gly-461 is TRIAD supradomain. The RING-type 1 zinc finger occupies Cys-240–Cys-295. 2 consecutive IBR-type zinc fingers follow at residues Glu-315–Cys-373 and Leu-411–Arg-452. The segment at Cys-415–Cys-446 adopts an RING-type 2; atypical zinc-finger fold. Residue Cys-428 is part of the active site. Zn(2+) contacts are provided by Cys-433, Cys-438, Cys-443, Cys-446, Cys-454, and His-458.

It belongs to the RBR family. Parkin subfamily. Forms an E3 ubiquitin ligase complex with E2 ubiquitin-conjugating enzymes. In terms of processing, auto-ubiquitinates in an E2-dependent manner leading to its own degradation. Post-translationally, phosphorylated. Activation requires phosphorylation at Ser-92 by Pink1 and binding to Pink1-phosphorylated polyubiquitin chains. Phosphorylation at Thr-176 by Pink1 is also important for mitochondrial localization.

It localises to the mitochondrion. The protein resides in the cytoplasm. The protein localises to the cytosol. It carries out the reaction [E2 ubiquitin-conjugating enzyme]-S-ubiquitinyl-L-cysteine + [acceptor protein]-L-lysine = [E2 ubiquitin-conjugating enzyme]-L-cysteine + [acceptor protein]-N(6)-ubiquitinyl-L-lysine.. The protein operates within protein modification; protein ubiquitination. In the autoinhibited state the side chain of Phe-460 inserts into a hydrophobic groove in RING-0, occluding the ubiquitin acceptor site Cys-428, whereas the REP repressor element binds RING-1 and blocks its E2-binding site. Activation of park requires 2 steps: (1) phosphorylation at Ser-92 by Pink1 and (2) binding to phosphorylated ubiquitin, leading to unlock repression of the catalytic Cys-428 by the RING-0 region via an allosteric mechanism and converting park to its fully-active form. According to another report, phosphorylation at Ser-92 by Pink1 is not essential for activation and only binding to phosphorylated ubiquitin is essential to unlock repression. Functionally, E3 ubiquitin-protein ligase which accepts ubiquitin from E2 ubiquitin-conjugating enzymes in the form of a thioester and then directly transfers the ubiquitin to targeted substrates, such as Marf, Opa1, Sep1, Tom20 and porin. Mediates monoubiquitination as well as 'Lys-6', 'Lys-11', 'Lys-48'-linked and 'Lys-63'-linked polyubiquitination of substrates, depending on the context. Protects against mitochondrial dysfunction during cellular stress, by acting downstream of Pink1, to coordinate mitochondrial quality control mechanisms that remove and replace dysfunctional mitochondrial components. Depending on the severity of mitochondrial damage and/or dysfunction, activity ranges from preventing apoptosis and stimulating mitochondrial biogenesis to regulating mitochondrial dynamics and eliminating severely damaged mitochondria via mitophagy. Appears to be particularly important in maintaining the physiology and function of cells with high energy demands that are undergoing stress or altered metabolic environment, including spermatids, muscle cells and neurons such as the dopaminergic (DA) neurons. Activation and recruitment onto the outer membrane of damaged/dysfunctional mitochondria (OMM) requires Pink1-mediated phosphorylation of both park and ubiquitin. In depolarized mitochondria, mediates the decision between mitophagy or preventing apoptosis by inducing either the poly- or monoubiquitination of porin/VDAC; polyubiquitination of porin promotes mitophagy, while monoubiquitination of porin decreases mitochondrial calcium influx which ultimately inhibits apoptosis. When cellular stress results in irreversible mitochondrial damage, promotes the autophagic degradation of dysfunctional depolarized mitochondria (mitophagy) by promoting the ubiquitination of mitochondrial proteins. Preferentially assembles 'Lys-6'-, 'Lys-11'- and 'Lys-63'-linked polyubiquitin chains following mitochondrial damage, leading to mitophagy. In developing tissues, inhibits JNK-mediated apoptosis by negatively regulating bsk transcription. The Pink1-park pathway also promotes fission and/or inhibits fusion of damaged mitochondria by mediating the ubiquitination and subsequent degradation of proteins involved in mitochondrial fusion/fission such as Marf and Opa1. This prevents the refusion of unhealthy mitochondria with the healthy mitochondrial network and/or initiates mitochondrial fragmentation facilitating their later engulfment by autophagosomes. Regulates motility of damaged mitochondria by phosphorylating Miro which likely promotes its park-dependent degradation by the proteasome; in motor neurons, this inhibits mitochondrial intracellular anterograde transport along the axons which probably increases the chance of the mitochondria being eliminated in the soma. The Pink1-park pathway is also involved in mitochondrial regeneration processes such as promoting mitochondrial biogenesis, activating localized mitochondrial repair, promoting selective turnover of mitochondrial proteins and initiating the mitochondrial import of endogenous proteins. Involved in mitochondrial biogenesis via the ubiquitination of transcriptional repressor Paris which leads to its subsequent proteasomal degradation and allows activation of the transcription factor srl. Promotes localized mitochondrial repair by activating the translation of specific nuclear-encoded mitochondrial RNAs (nc-mtRNAs) on the mitochondrial surface, including several key electron transport chain component nc-mtRNAs. This is E3 ubiquitin-protein ligase parkin from Pediculus humanus subsp. corporis (Body louse).